The chain runs to 913 residues: E3 ubiquitin-protein ligase ZNRF3 (913 aa).

The segment at 1–32 (MRPRSGGRPGAPGRRRRRLRRGPRGRRLPPPP) is disordered. The N-terminal stretch at 1 to 52 (MRPRSGGRPGAPGRRRRRLRRGPRGRRLPPPPPLPLLLGLLLAAAGPGAARA) is a signal peptide. A compositionally biased stretch (basic residues) spans 13–27 (GRRRRRLRRGPRGRR). The Extracellular portion of the chain corresponds to 53–216 (KETAFVEVVL…PRQPTEYFDM (164 aa)). The chain crosses the membrane as a helical span at residues 217-237 (GIFLAFFVVVSLVCLILLVKI). The Cytoplasmic portion of the chain corresponds to 238-913 (KLKQRRSQNS…GSGPGIGTGA (676 aa)). The RING-type; atypical zinc-finger motif lies at 290–331 (CAICLEKYIDGEELRVIPCTHRFHRKCVDPWLLQHHTCPHCR). Disordered stretches follow at residues 601-669 (AVHL…GLEV) and 855-913 (REEE…GTGA). 2 stretches are compositionally biased toward polar residues: residues 634-664 (SGDQLSTCSLEMNYSSNSSLEPRGPNSSTSE) and 881-890 (ASLSSAPQDT). The span at 903 to 913 (PGSGPGIGTGA) shows a compositional bias: gly residues.

It belongs to the ZNRF3 family. Interacts with LRP6, FZD4, FZD5, FZD6 and FZD8. Interacts with RSPO1; interaction promotes indirect interaction with LGR4 and membrane clearance of ZNRF3. Interacts with LMBR1L.

It localises to the cell membrane. The catalysed reaction is S-ubiquitinyl-[E2 ubiquitin-conjugating enzyme]-L-cysteine + [acceptor protein]-L-lysine = [E2 ubiquitin-conjugating enzyme]-L-cysteine + N(6)-ubiquitinyl-[acceptor protein]-L-lysine.. It functions in the pathway protein modification; protein ubiquitination. Its activity is regulated as follows. Negatively regulated by R-spondin proteins such as RSPO1: interaction with RSPO1 induces the indirect association between ZNRF3 and LGR4, promoting membrane clearance of ZNRF3. In terms of biological role, E3 ubiquitin-protein ligase that acts as a negative regulator of the Wnt signaling pathway by mediating the ubiquitination and subsequent degradation of Wnt receptor complex components Frizzled and LRP6. Acts on both canonical and non-canonical Wnt signaling pathway. Acts as a tumor suppressor in the intestinal stem cell zone by inhibiting the Wnt signaling pathway, thereby restricting the size of the intestinal stem cell zone. Along with RSPO2 and RNF43, constitutes a master switch that governs limb specification. This chain is E3 ubiquitin-protein ligase ZNRF3 (Znrf3), found in Mus musculus (Mouse).